A 295-amino-acid polypeptide reads, in one-letter code: uncharacterized protein (295 aa).

In terms of domain architecture, Sigma-54 factor interaction spans 4–233 (IVVKSMAMEK…LQNTIERLVL (230 aa)).

This is an uncharacterized protein from Pseudomonas sp. (strain NS671).